The chain runs to 192 residues: Imidazoleglycerol-phosphate dehydratase (192 aa).

This sequence belongs to the imidazoleglycerol-phosphate dehydratase family.

Its subcellular location is the cytoplasm. The enzyme catalyses D-erythro-1-(imidazol-4-yl)glycerol 3-phosphate = 3-(imidazol-4-yl)-2-oxopropyl phosphate + H2O. It functions in the pathway amino-acid biosynthesis; L-histidine biosynthesis; L-histidine from 5-phospho-alpha-D-ribose 1-diphosphate: step 6/9. This chain is Imidazoleglycerol-phosphate dehydratase, found in Vesicomyosocius okutanii subsp. Calyptogena okutanii (strain HA).